Reading from the N-terminus, the 613-residue chain is Cysteine--tRNA ligase (613 aa).

The disordered stretch occupies residues 1 to 130 (MSAGAGTPRR…TRGGVARSGN (130 aa)). 6 tandem repeats follow at residues 36–49 (PTRG…RPGV), 50–63 (PTRG…RLGV), 64–77 (PARG…RPGV), 78–91 (PARE…RPGV), 92–105 (PTRG…RLGV), and 106–119 (PARG…RPGV). The interval 36–119 (PTRGDKKRAR…DKKRARRPGV (84 aa)) is 6 X 14 AA tandem repeats of P-[TA]-R-G-D-K-K-R-A-[RP]-R-[PL]-G-V. Residues 148-613 (VTIRLYDTSA…QGPRWSLGSR (466 aa)) form a cysteinyl-tRNA synthetase region. C176 provides a ligand contact to Zn(2+). The 'HIGH' region signature appears at 178 to 188 (ATVQAAPHIGH). Zn(2+)-binding residues include C355, H380, and E384. Positions 411–415 (KMSKS) match the 'KMSKS' region motif. ATP is bound at residue K414.

This sequence belongs to the class-I aminoacyl-tRNA synthetase family. In terms of assembly, monomer. Zn(2+) serves as cofactor.

Its subcellular location is the cytoplasm. It catalyses the reaction tRNA(Cys) + L-cysteine + ATP = L-cysteinyl-tRNA(Cys) + AMP + diphosphate. The chain is Cysteine--tRNA ligase from Streptomyces coelicolor (strain ATCC BAA-471 / A3(2) / M145).